Reading from the N-terminus, the 264-residue chain is Thiazole synthase (264 aa).

The active-site Schiff-base intermediate with DXP is K106. 1-deoxy-D-xylulose 5-phosphate contacts are provided by residues G167, 193–194, and 215–216; these read AG and NT.

It belongs to the ThiG family. As to quaternary structure, homotetramer. Forms heterodimers with either ThiH or ThiS.

Its subcellular location is the cytoplasm. It carries out the reaction [ThiS sulfur-carrier protein]-C-terminal-Gly-aminoethanethioate + 2-iminoacetate + 1-deoxy-D-xylulose 5-phosphate = [ThiS sulfur-carrier protein]-C-terminal Gly-Gly + 2-[(2R,5Z)-2-carboxy-4-methylthiazol-5(2H)-ylidene]ethyl phosphate + 2 H2O + H(+). Its pathway is cofactor biosynthesis; thiamine diphosphate biosynthesis. Functionally, catalyzes the rearrangement of 1-deoxy-D-xylulose 5-phosphate (DXP) to produce the thiazole phosphate moiety of thiamine. Sulfur is provided by the thiocarboxylate moiety of the carrier protein ThiS. In vitro, sulfur can be provided by H(2)S. This chain is Thiazole synthase, found in Stenotrophomonas maltophilia (strain R551-3).